Reading from the N-terminus, the 496-residue chain is uncharacterized protein (496 aa).

12 helical membrane passes run 33–53 (FLKG…LIFA), 89–109 (LNFL…YTLI), 127–147 (PWFV…FTFF), 154–174 (VFNL…YEIF), 193–213 (LIIA…TPLV), 247–267 (IILI…NTNF), 285–305 (LWFI…VFAY), 320–340 (LWVY…YMVF), 355–375 (LLNL…VTLF), 382–402 (SLIN…IYIF), 411–431 (LLVL…IVGF), and 455–475 (VQIM…YLTI).

The protein resides in the cell membrane. This is an uncharacterized protein from Ureaplasma parvum serovar 3 (strain ATCC 700970).